The primary structure comprises 202 residues: CASP-like protein 2B1 (202 aa).

The Cytoplasmic segment spans residues 1-29 (MSYLGVGVSPGNVPVYHGSNLKVIDKRVR). A helical membrane pass occupies residues 30 to 50 (LAELVLRCLICGLGVLAAVLV). The Extracellular portion of the chain corresponds to 51–72 (GTDTQVKEIFSIQKKARFTDMK). The chain crosses the membrane as a helical span at residues 73 to 93 (ALVFLVIANGIAAAYSLLQGV). At 94–109 (RCVVGMVRGSALFSKP) the chain is on the cytoplasmic side. Residues 110–130 (LAWAIFSGDQMMAYLTVAAVA) traverse the membrane as a helical segment. The Extracellular segment spans residues 131–164 (AAAQSAVFAKLGQPELQWMKICNMYGKFCNQVGE). A helical transmembrane segment spans residues 165–185 (GIASALLVSVSMVVLSCISAF). Residues 186 to 202 (SLFRLYGANKGKDCTRW) are Cytoplasmic-facing.

Belongs to the Casparian strip membrane proteins (CASP) family. As to quaternary structure, homodimer and heterodimers.

It is found in the cell membrane. The sequence is that of CASP-like protein 2B1 from Ricinus communis (Castor bean).